The chain runs to 103 residues: MAQFVRNLVEKTPALVNAAVTYSKPRLATFWYYAKVELVPPTPAEIPRAIQGLKKIVNSAQTGSFKQLTVKEAVLNGLVATEVLMWFYVGEIIGKRGIIGYDV.

A2 bears the N-acetylalanine mark. An N6-acetyllysine mark is found at K11, K24, K35, and K54.

Belongs to the ATPase g subunit family. In terms of assembly, component of the ATP synthase complex composed at least of ATP5F1A/subunit alpha, ATP5F1B/subunit beta, ATP5MC1/subunit c (homooctomer), MT-ATP6/subunit a, MT-ATP8/subunit 8, ATP5ME/subunit e, ATP5MF/subunit f, ATP5MG/subunit g, ATP5MK/subunit k, ATP5MJ/subunit j, ATP5F1C/subunit gamma, ATP5F1D/subunit delta, ATP5F1E/subunit epsilon, ATP5PF/subunit F6, ATP5PB/subunit b, ATP5PD/subunit d, ATP5PO/subunit OSCP. ATP synthase complex consists of a soluble F(1) head domain (subunits alpha(3) and beta(3)) - the catalytic core - and a membrane F(0) domain - the membrane proton channel (subunits c, a, 8, e, f, g, k and j). These two domains are linked by a central stalk (subunits gamma, delta, and epsilon) rotating inside the F1 region and a stationary peripheral stalk (subunits F6, b, d, and OSCP).

It is found in the mitochondrion. Its subcellular location is the mitochondrion inner membrane. Subunit g, of the mitochondrial membrane ATP synthase complex (F(1)F(0) ATP synthase or Complex V) that produces ATP from ADP in the presence of a proton gradient across the membrane which is generated by electron transport complexes of the respiratory chain. ATP synthase complex consist of a soluble F(1) head domain - the catalytic core - and a membrane F(1) domain - the membrane proton channel. These two domains are linked by a central stalk rotating inside the F(1) region and a stationary peripheral stalk. During catalysis, ATP synthesis in the catalytic domain of F(1) is coupled via a rotary mechanism of the central stalk subunits to proton translocation. In vivo, can only synthesize ATP although its ATP hydrolase activity can be activated artificially in vitro. Part of the complex F(0) domain. This is ATP synthase F(0) complex subunit g, mitochondrial from Pongo abelii (Sumatran orangutan).